A 440-amino-acid chain; its full sequence is Origin recognition complex subunit 4 (440 aa).

64 to 71 (GPKGSGKS) contacts ATP.

This sequence belongs to the ORC4 family. In terms of assembly, ORC is composed of six subunits.

Its subcellular location is the nucleus. Its function is as follows. Component of the origin recognition complex (ORC) that binds origins of replication. DNA-binding is ATP-dependent, however specific DNA sequences that define origins of replication have not been identified so far. ORC is required to assemble the pre-replication complex necessary to initiate DNA replication. The sequence is that of Origin recognition complex subunit 4 (orcD) from Dictyostelium discoideum (Social amoeba).